Here is a 409-residue protein sequence, read N- to C-terminus: 1-deoxy-D-xylulose 5-phosphate reductoisomerase (409 aa).

Residues Thr-10, Gly-11, Ser-12, Ile-13, Gly-36, Arg-37, Asn-38, and Asn-126 each coordinate NADPH. A 1-deoxy-D-xylulose 5-phosphate-binding site is contributed by Lys-127. An NADPH-binding site is contributed by Glu-128. Asp-152 contributes to the Mn(2+) binding site. 1-deoxy-D-xylulose 5-phosphate is bound by residues Ser-153, Glu-154, Ser-190, and His-213. Glu-154 is a Mn(2+) binding site. Gly-219 provides a ligand contact to NADPH. The 1-deoxy-D-xylulose 5-phosphate site is built by Ser-226, Asn-231, Lys-232, and Glu-235. A Mn(2+)-binding site is contributed by Glu-235.

This sequence belongs to the DXR family. Requires Mg(2+) as cofactor. The cofactor is Mn(2+).

The catalysed reaction is 2-C-methyl-D-erythritol 4-phosphate + NADP(+) = 1-deoxy-D-xylulose 5-phosphate + NADPH + H(+). It participates in isoprenoid biosynthesis; isopentenyl diphosphate biosynthesis via DXP pathway; isopentenyl diphosphate from 1-deoxy-D-xylulose 5-phosphate: step 1/6. Its function is as follows. Catalyzes the NADPH-dependent rearrangement and reduction of 1-deoxy-D-xylulose-5-phosphate (DXP) to 2-C-methyl-D-erythritol 4-phosphate (MEP). The polypeptide is 1-deoxy-D-xylulose 5-phosphate reductoisomerase (Prochlorococcus marinus (strain MIT 9515)).